Here is a 354-residue protein sequence, read N- to C-terminus: Uroporphyrinogen decarboxylase (354 aa).

Substrate contacts are provided by residues 27-31 (RQAGR), D77, Y154, T209, and H327.

The protein belongs to the uroporphyrinogen decarboxylase family. As to quaternary structure, homodimer.

The protein localises to the cytoplasm. It catalyses the reaction uroporphyrinogen III + 4 H(+) = coproporphyrinogen III + 4 CO2. It functions in the pathway porphyrin-containing compound metabolism; protoporphyrin-IX biosynthesis; coproporphyrinogen-III from 5-aminolevulinate: step 4/4. In terms of biological role, catalyzes the decarboxylation of four acetate groups of uroporphyrinogen-III to yield coproporphyrinogen-III. The sequence is that of Uroporphyrinogen decarboxylase from Salmonella dublin (strain CT_02021853).